The following is a 259-amino-acid chain: Global transcriptional regulator CodY (259 aa).

Residues 1–155 are GAF domain; the sequence is MNLLEKTRQL…SATVVGMEIL (155 aa). The segment at residues 203-222 is a DNA-binding region (H-T-H motif); sequence ASKIADRVGITRSVIVNALR.

The protein belongs to the CodY family.

The protein resides in the cytoplasm. In terms of biological role, DNA-binding global transcriptional regulator which is involved in the adaptive response to starvation and acts by directly or indirectly controlling the expression of numerous genes in response to nutrient availability. During rapid exponential growth, CodY is highly active and represses genes whose products allow adaptation to nutrient depletion. The polypeptide is Global transcriptional regulator CodY (Exiguobacterium sp. (strain ATCC BAA-1283 / AT1b)).